A 102-amino-acid chain; its full sequence is Small ribosomal subunit protein uS10 (102 aa).

This sequence belongs to the universal ribosomal protein uS10 family. As to quaternary structure, part of the 30S ribosomal subunit.

Functionally, involved in the binding of tRNA to the ribosomes. The protein is Small ribosomal subunit protein uS10 of Methanococcus maripaludis (strain C6 / ATCC BAA-1332).